A 174-amino-acid chain; its full sequence is B3 domain-containing protein At3g06220 (174 aa).

A DNA-binding region (TF-B3) is located at residues 8–101 (PRFYTVFLSC…SYEVSIYGRG (94 aa)). The disordered stretch occupies residues 114-174 (EISDESESDN…ISDASDSDYY (61 aa)). 2 stretches are compositionally biased toward acidic residues: residues 139–150 (ENSDDTEGDNDS) and 164–174 (EISDASDSDYY).

The protein localises to the nucleus. The protein is B3 domain-containing protein At3g06220 of Arabidopsis thaliana (Mouse-ear cress).